An 814-amino-acid polypeptide reads, in one-letter code: DNA replication licensing factor Mcm6 (814 aa).

The C4-type zinc-finger motif lies at 152–179 (CLDCQTEIRDVEQQFKFTNPTICRNPVC). Residues 339–545 (LYQNLINSLF…VVDYAIARKI (207 aa)) enclose the MCM domain. The ATP site is built by Ser-392, Thr-393, Ala-394, Lys-395, Ser-396, and Asn-497. Residues 521-524 (SRFD) carry the Arginine finger motif. The ADP site is built by Arg-612 and Glu-615. The tract at residues 656–696 (DIHLDEEEGEENENVMDIGEETPEDTPRTNETEENDQDTPA) is disordered. Positions 659 to 679 (LDEEEGEENENVMDIGEETPE) are enriched in acidic residues.

The protein belongs to the MCM family. As to quaternary structure, component of the Mcm2-7 complex. The complex forms a toroidal hexameric ring with the proposed subunit order Mcm2-Mcm6-Mcm4-Mcm7-Mcm3-Mcm5 (By simililarity). The heterodimers of Mcm4/Mcm6 and Mcm3/Mcm5 interact with Mcm2 and Mcm7.

It localises to the nucleus. The enzyme catalyses ATP + H2O = ADP + phosphate + H(+). Functionally, acts as a component of the MCM2-7 complex (MCM complex) which is the replicative helicase essential for 'once per cell cycle' DNA replication initiation and elongation in eukaryotic cells. Core component of CDC45-MCM-GINS (CMG) helicase, the molecular machine that unwinds template DNA during replication, and around which the replisome is built. The active ATPase sites in the MCM2-7 ring are formed through the interaction surfaces of two neighboring subunits such that a critical structure of a conserved arginine finger motif is provided in trans relative to the ATP-binding site of the Walker A box of the adjacent subunit. The six ATPase active sites, however, are likely to contribute differentially to the complex helicase activity. The polypeptide is DNA replication licensing factor Mcm6 (Anopheles gambiae (African malaria mosquito)).